Here is an 841-residue protein sequence, read N- to C-terminus: Replication origin-binding protein (841 aa).

One can recognise a Helicase ATP-binding domain in the interval 45–210; that stretch reads PLYPRTRNVL…AIMRGEENIH (166 aa). 58 to 65 is a binding site for ATP; the sequence is APMGSGKT.

This sequence belongs to the herpesviridae OriBP family. As to quaternary structure, homodimer. Interacts with the major DNA-binding protein. Interacts with the DNA helicase/primase complex-associated protein and the polymerase accessory protein.

The protein resides in the host nucleus. Functions as a docking protein to recruit essential components of the viral replication machinery to viral DNA origins. In the presence of the major DNA-binding protein, opens dsDNA leading to a conformational change in the origin that facilitates DNA unwinding and subsequent replication. In Gallid herpesvirus 2 (strain Chicken/Md5/ATCC VR-987) (GaHV-2), this protein is Replication origin-binding protein (MDV021).